Reading from the N-terminus, the 424-residue chain is Tyrosine--tRNA ligase (424 aa).

Tyr37 is a binding site for L-tyrosine. A 'HIGH' region motif is present at residues 42–51; sequence PTADSLHLGH. Residues Tyr175 and Gln179 each coordinate L-tyrosine. The 'KMSKS' region motif lies at 235 to 239; sequence KFGKT. An ATP-binding site is contributed by Lys238. An S4 RNA-binding domain is found at 357–414; the sequence is ADLMQALVDAELQPSRGQARKTIASNAVTINGEKQSDPEYIFNDEDRLFGRYTLLRRG.

It belongs to the class-I aminoacyl-tRNA synthetase family. TyrS type 1 subfamily. As to quaternary structure, homodimer.

The protein resides in the cytoplasm. It carries out the reaction tRNA(Tyr) + L-tyrosine + ATP = L-tyrosyl-tRNA(Tyr) + AMP + diphosphate + H(+). Catalyzes the attachment of tyrosine to tRNA(Tyr) in a two-step reaction: tyrosine is first activated by ATP to form Tyr-AMP and then transferred to the acceptor end of tRNA(Tyr). This chain is Tyrosine--tRNA ligase, found in Salmonella agona (strain SL483).